The primary structure comprises 684 residues: Histamine oxidase (684 aa).

Residue 316–327 coordinates substrate; sequence YFDSGEYLVGRD. The active-site Proton acceptor is the Asp318. Cys337 and Cys363 are oxidised to a cystine. Substrate is bound at residue 399–404; it reads VGNYDY. Tyr402 acts as the Schiff-base intermediate with substrate; via topaquinone in catalysis. Tyr402 carries the 2',4',5'-topaquinone modification. His451 and His453 together coordinate Cu cation. Residues Asp460, Glu500, Tyr590, and Asp601 each contribute to the Ca(2+) site. Residue Asp460 coordinates Mn(2+). Asp601 is a Mn(2+) binding site. A Cu cation-binding site is contributed by His612. The tract at residues 647-684 is disordered; that stretch reads SSAAGHCGTGSEREHAAPGGTAVGHSGPDTGGQGHCGH. The segment covering 675–684 has biased composition (gly residues); sequence DTGGQGHCGH.

This sequence belongs to the copper/topaquinone oxidase family. In terms of assembly, homodimer. Requires Cu cation as cofactor. Zn(2+) serves as cofactor. It depends on Ca(2+) as a cofactor. L-topaquinone is required as a cofactor. The cofactor is Mn(2+). In terms of processing, topaquinone (TPQ) is generated by copper-dependent autoxidation of a specific tyrosyl residue.

The protein localises to the cytoplasm. The catalysed reaction is a primary methyl amine + O2 + H2O = an aldehyde + H2O2 + NH4(+). It carries out the reaction histamine + O2 + H2O = imidazole-4-acetaldehyde + H2O2 + NH4(+). In terms of biological role, oxidizes histamine. Other amines including phenethylamine, tyramine, tryptamine, putrescine, and benzylamine also serve as substrate. This is Histamine oxidase from Arthrobacter globiformis.